The following is a 198-amino-acid chain: MEIITQDGWLEVITGCMFSGKTEELVRRLRRAVIAKKETIAIKPALDTRYDLVAVVSHSGFSFNAIPVEDPKSILGMAKDAEVVGIDEAQFFTGELVPVIRELLQNKKRVIVAGLDLDFRGEPFGIMPTLLALADEVTKLHAICSVCGNIATKTQRLINGRPARYDDPTILVGGLETYEARCNLHHEVPGKTLTLFKE.

ATP contacts are provided by residues 15–22 (GCMFSGKT) and 87–90 (DEAQ). The active-site Proton acceptor is the E88. Positions 144, 147, 182, and 185 each coordinate Zn(2+).

The protein belongs to the thymidine kinase family. Homotetramer.

The protein localises to the cytoplasm. The enzyme catalyses thymidine + ATP = dTMP + ADP + H(+). The sequence is that of Thymidine kinase from Coprothermobacter proteolyticus (strain ATCC 35245 / DSM 5265 / OCM 4 / BT).